A 117-amino-acid polypeptide reads, in one-letter code: Elafin (117 aa).

The signal sequence occupies residues 1-22; the sequence is MRASSFLIVVVFLIAGTLVLEA. The propeptide occupies 23–60; the sequence is AVTGVPVKGQDTVKGRVPFNGQDPVKGQVSVKGQDKVK. SVP-1 clotting repeat units lie at residues 29 to 54 and 55 to 72; these read VKGQ…VSVK and GQDK…VSTK. A 2 X tandem repeats of SVP-1 like motif region spans residues 29-72; sequence VKGQDTVKGRVPFNGQDPVKGQVSVKGQDKVKAQEPVKGPVSTK. Positions 69-117 constitute a WAP domain; that stretch reads VSTKPGSCPIILIRCAMLNPPNRCLKDTDCPGIKKCCEGSCGMACFVPQ. 4 disulfides stabilise this stretch: Cys-76/Cys-105, Cys-83/Cys-109, Cys-92/Cys-104, and Cys-98/Cys-113.

It localises to the secreted. Functionally, neutrophil and pancreatic elastase-specific inhibitor of skin. It may prevent elastase-mediated tissue proteolysis. Has been shown to inhibit the alpha-4-beta-2/CHRNA2-CHRNB2 nicotinic acetylcholine receptor and to produce a weak inhibition on Kv11.1/KCNH2/ERG1 and on the transient receptor potential cation channel subfamily V member 1 (TRPV1). The protein is Elafin (PI3) of Homo sapiens (Human).